Reading from the N-terminus, the 846-residue chain is Matrin-3 (846 aa).

Ser-2 carries the N-acetylserine modification. N6-acetyllysine; alternate is present on Lys-3. A Glycyl lysine isopeptide (Lys-Gly) (interchain with G-Cter in SUMO2); alternate cross-link involves residue Lys-3. 7 positions are modified to phosphoserine: Ser-4, Ser-9, Ser-14, Ser-22, Ser-41, Ser-118, and Ser-126. Residues Lys-132 and Lys-146 each participate in a glycyl lysine isopeptide (Lys-Gly) (interchain with G-Cter in SUMO2) cross-link. Disordered stretches follow at residues Arg-147–Pro-174 and Asp-187–Tyr-213. Phosphothreonine is present on Thr-150. Phosphoserine is present on Ser-157. A Phosphotyrosine modification is found at Tyr-158. Residues Arg-160–Pro-174 show a composition bias toward basic and acidic residues. Ser-164, Ser-188, and Ser-195 each carry phosphoserine. Residues Asp-201–Tyr-213 show a composition bias toward basic and acidic residues. The residue at position 202 (Tyr-202) is a Phosphotyrosine. Phosphoserine is present on residues Ser-206, Ser-208, and Ser-211. Tyr-219 carries the phosphotyrosine modification. Ser-234 is subject to Phosphoserine. Residue Lys-245 forms a Glycyl lysine isopeptide (Lys-Gly) (interchain with G-Cter in SUMO2) linkage. A Phosphoserine modification is found at Ser-264. Residue Lys-269 forms a Glycyl lysine isopeptide (Lys-Gly) (interchain with G-Cter in SUMO2) linkage. Ser-275 carries the post-translational modification Phosphoserine. The disordered stretch occupies residues Pro-342–Val-394. One can recognise an RRM 1 domain in the interval Arg-398–Lys-473. Glycyl lysine isopeptide (Lys-Gly) (interchain with G-Cter in SUMO2) cross-links involve residues Lys-478, Lys-487, and Lys-491. Residues Arg-496–Lys-571 enclose the RRM 2 domain. Ser-509 and Ser-511 each carry phosphoserine. A Glycyl lysine isopeptide (Lys-Gly) (interchain with G-Cter in SUMO2) cross-link involves residue Lys-515. Position 522 is an N6-acetyllysine; alternate (Lys-522). Lys-522 participates in a covalent cross-link: Glycyl lysine isopeptide (Lys-Gly) (interchain with G-Cter in SUMO2); alternate. A Phosphoserine modification is found at Ser-533. Residues Lys-554 and Lys-555 each participate in a glycyl lysine isopeptide (Lys-Gly) (interchain with G-Cter in SUMO2) cross-link. The residue at position 571 (Lys-571) is an N6-acetyllysine. The segment at Lys-588–Arg-779 is disordered. Residues Ser-596, Ser-598, Ser-604, and Ser-606 each carry the phosphoserine modification. The segment covering Asp-600 to Gln-642 has biased composition (basic and acidic residues). Residues Lys-616 and Lys-629 each participate in a glycyl lysine isopeptide (Lys-Gly) (interchain with G-Cter in SUMO2) cross-link. Residues Glu-652–Ala-664 show a composition bias toward acidic residues. Phosphoserine is present on residues Ser-653, Ser-670, Ser-672, and Ser-673. Low complexity predominate over residues Ala-665 to Gly-675. A Phosphothreonine modification is found at Thr-678. Ser-688 carries the post-translational modification Phosphoserine. Positions Ser-688–Pro-703 are enriched in basic and acidic residues. A Nuclear localization signal motif is present at residues Ser-709 to Asp-717. Residues Lys-718 and Lys-735 each participate in a glycyl lysine isopeptide (Lys-Gly) (interchain with G-Cter in SUMO2) cross-link. Thr-740 is modified (phosphothreonine). Ser-746 and Ser-758 each carry phosphoserine. Positions Asp-766–Arg-779 are enriched in basic and acidic residues. A Glycyl lysine isopeptide (Lys-Gly) (interchain with G-Cter in SUMO2) cross-link involves residue Lys-769. A Matrin-type zinc finger spans residues Phe-800 to Lys-831. Lys-835 carries the post-translational modification N6-acetyllysine; alternate. A Glycyl lysine isopeptide (Lys-Gly) (interchain with G-Cter in SUMO2); alternate cross-link involves residue Lys-835.

As to quaternary structure, part of a complex consisting of SFPQ, NONO and MATR3. Interacts with AGO1 and AGO2. Part of a complex composed at least of ASH2L, EMSY, HCFC1, HSPA8, CCAR2, MATR3, MKI67, RBBP5, TUBB2A, WDR5 and ZNF335; this complex may have a histone H3-specific methyltransferase activity. Interacts with TARDBP. Part of the HDP-RNP complex composed of at least HEXIM1, PRKDC, XRCC5, XRCC6, paraspeckle proteins (SFPQ, NONO, PSPC1, RBM14, and MATR3) and NEAT1 RNA. Interacts with FUS. Interacts with IGF2BP1. Interacts with IGF2BP2 and IGF2BP3. Interacts with RBPMS.

Its subcellular location is the nucleus matrix. Functionally, may play a role in transcription or may interact with other nuclear matrix proteins to form the internal fibrogranular network. In association with the SFPQ-NONO heteromer may play a role in nuclear retention of defective RNAs. Plays a role in the regulation of DNA virus-mediated innate immune response by assembling into the HDP-RNP complex, a complex that serves as a platform for IRF3 phosphorylation and subsequent innate immune response activation through the cGAS-STING pathway. Binds to N6-methyladenosine (m6A)-containing mRNAs and contributes to MYC stability by binding to m6A-containing MYC mRNAs. May bind to specific miRNA hairpins. This Mus musculus (Mouse) protein is Matrin-3 (Matr3).